A 232-amino-acid polypeptide reads, in one-letter code: Beta-casein (232 aa).

An N-terminal signal peptide occupies residues 1–15 (MKLLILACFVALALA). N22 carries N-linked (GlcNAc...) asparagine glycosylation. Phosphoserine is present on S24. Residue T27 is modified to Phosphothreonine. S30, S32, S33, and S34 each carry phosphoserine. Residues 48–63 (KLKREEQQQTENERQN) show a composition bias toward basic and acidic residues. The tract at residues 48–74 (KLKREEQQQTENERQNKIHQFPQPQPL) is disordered.

It belongs to the beta-casein family. Mammary gland specific. Secreted in milk.

The protein resides in the secreted. Important role in determination of the surface properties of the casein micelles. In Sus scrofa (Pig), this protein is Beta-casein (CSN2).